Consider the following 78-residue polypeptide: Large ribosomal subunit protein bL28 (78 aa).

Residues 1 to 20 form a disordered region; the sequence is MSRVCQVTGKRPAVGNNRSH.

The protein belongs to the bacterial ribosomal protein bL28 family.

The sequence is that of Large ribosomal subunit protein bL28 from Actinobacillus pleuropneumoniae serotype 7 (strain AP76).